A 99-amino-acid chain; its full sequence is Putative GIY-YIG domain-containing protein 242L (99 aa).

One can recognise a GIY-YIG domain in the interval 5–81; that stretch reads NGWNIYMVTM…KKQTKKVKLQ (77 aa).

This chain is Putative GIY-YIG domain-containing protein 242L, found in Invertebrate iridescent virus 6 (IIV-6).